A 223-amino-acid chain; its full sequence is Endonuclease V (223 aa).

Mg(2+)-binding residues include Asp35 and Asp103.

Belongs to the endonuclease V family. Mg(2+) is required as a cofactor.

Its subcellular location is the cytoplasm. It carries out the reaction Endonucleolytic cleavage at apurinic or apyrimidinic sites to products with a 5'-phosphate.. In terms of biological role, DNA repair enzyme involved in the repair of deaminated bases. Selectively cleaves double-stranded DNA at the second phosphodiester bond 3' to a deoxyinosine leaving behind the intact lesion on the nicked DNA. The polypeptide is Endonuclease V (Escherichia coli O139:H28 (strain E24377A / ETEC)).